Consider the following 417-residue polypeptide: MLPNTGKLAGCTLFITGASRGIGKAIALKAARDGANIVVAAKTAEAHPKLPGTIYTAASEIEAAGGKALPCIVDVRDENQISAAVEKAVDAFGGIDILVNNASAISLTNTLETSMKKVDLMMGINTRGTYLTSKICIPYLKKSKVAHILNLSPPLNLNPMWFKNHCAYTIAKYGMSMCALGMSEEYKGEIAVNALWPKTAIHTAAMDMLGGSGVDKQCRKPDIMADAAYAILTKTKDFTGNFVIDEELLQQEGIKDLDVYAISPGHPLLPDFFLDESPETLASAMEEHGATAAFKAGKKQAKSQDASPLQETFKAIERSVNEEAVKSTQGIYQFVLSGEESGNWFLDLKNDKGGVGKGEPSTKADVVMSMDSGDFIKMFAGKMKPTMAFMSGKLKIKGDMGLALKLEKILGQMNAKL.

NADP(+) is bound by residues 17-23 (GASRGIG), Lys42, and Asp74. Tyr168 functions as the Proton acceptor in the catalytic mechanism. Lys172 serves as a coordination point for NADP(+). An SCP2 domain is found at 306–414 (ASPLQETFKA…KLEKILGQMN (109 aa)).

It belongs to the short-chain dehydrogenases/reductases (SDR) family.

Its subcellular location is the peroxisome. It is found in the mitochondrion. Its function is as follows. Has apparently no steroid dehydrogenase activity. Might act as a metabolic regulator that affects systemic adaptation to nutritional cues. This chain is Hydroxysteroid dehydrogenase-like protein 2 (hsdl2), found in Xenopus laevis (African clawed frog).